The primary structure comprises 204 residues: MGAYRYMQELWRKKQSDVMRFLLRVRCWQYRQLSNLHRAPRPTRPDKARRLGYKAKQGYVVYRVRVRRGGRKRPVPKGATYGKPVHHGVNQIKFARSLQSTAEERAGRHCGALRVLNSYWVGEDSTYKFFEVILIDPFHKAVRRNPDTQWITKAVHKHREMRGLTSAGKKSRGLGKGHKFHLTIGGSRRAAWKRRNTLQLRRYR.

It belongs to the eukaryotic ribosomal protein eL15 family. As to quaternary structure, component of the large ribosomal subunit.

Its subcellular location is the cytoplasm. Component of the large ribosomal subunit. The ribosome is a large ribonucleoprotein complex responsible for the synthesis of proteins in the cell. The chain is Large ribosomal subunit protein eL15 (rpl15) from Siniperca knerii (Big-eye mandarin fish).